The sequence spans 340 residues: Chorismate mutase 1, chloroplastic (340 aa).

The transit peptide at 1–65 (MEASLLMRSS…KPRSGTSSVH (65 aa)) directs the protein to the chloroplast. Ala66 bears the N-acetylalanine mark. Arg79 is a binding site for L-phenylalanine. Residues 79-340 (RVDESESLTL…QVEYLLRRLD (262 aa)) form the Chorismate mutase domain. L-tyrosine contacts are provided by residues Arg150 and 211–214 (NYGS). 211-214 (NYGS) is a binding site for L-phenylalanine.

Homodimer. In terms of tissue distribution, expressed in roots, shoots, rosette leaves, stems, cauline leaves, flowers and siliques.

It is found in the plastid. The protein localises to the chloroplast. It catalyses the reaction chorismate = prephenate. Its pathway is metabolic intermediate biosynthesis; prephenate biosynthesis; prephenate from chorismate: step 1/1. Its activity is regulated as follows. Allosterically inhibited by tyrosine and phenylalanine. Activated by tryptophan. In terms of biological role, may play a role in chloroplast biogenesis. This Arabidopsis thaliana (Mouse-ear cress) protein is Chorismate mutase 1, chloroplastic.